The chain runs to 337 residues: MNTEATHDQNEAQSTGVRLRNAREQLGLSQQAVAERLCLKVSTVRDIEEDKAPADLASTFLRGYIRSYARLVHIPEEELLPGLEKQAPVRPSKVAPMQSFSLGKRRKKRDGWLMTFTWLVLFVVVGLTGAWWWQNHKAQQEELTTMVDQSSAELNAGGDSAQSVPLDTSEAASQDSTPAPTAPVDSTATNAVPQTPDASATTTAPAADAQQNAVVAPSQANVDTATTAPAATGDTASLPTDQAGVATSAVDQNALVMNFTADCWLEVTDATGKKLFSGMQRKDGNLNLTGQAPYKLKIGAPAAVQIQYQGKPVDLSRFIRTNQVARLTLNAEQSPAQ.

Residues 1-111 (MNTEATHDQN…LGKRRKKRDG (111 aa)) are Cytoplasmic-facing. Residues 19 to 71 (LRNAREQLGLSQQAVAERLCLKVSTVRDIEEDKAPADLASTFLRGYIRSYARL) form the HTH cro/C1-type domain. The segment at residues 30-49 (QQAVAERLCLKVSTVRDIEE) is a DNA-binding region (H-T-H motif). The chain crosses the membrane as a helical; Signal-anchor for type II membrane protein span at residues 112-132 (WLMTFTWLVLFVVVGLTGAWW). Topologically, residues 133 to 337 (WQNHKAQQEE…TLNAEQSPAQ (205 aa)) are periplasmic. Residues 155 to 220 (NAGGDSAQSV…QNAVVAPSQA (66 aa)) form a disordered region. Residues 160–192 (SAQSVPLDTSEAASQDSTPAPTAPVDSTATNAV) are compositionally biased toward polar residues. Residues 193–217 (PQTPDASATTTAPAADAQQNAVVAP) show a composition bias toward low complexity.

It belongs to the RodZ family.

Its subcellular location is the cell inner membrane. In terms of biological role, cytoskeletal protein that is involved in cell-shape control through regulation of the length of the long axis. The polypeptide is Cytoskeleton protein RodZ (Citrobacter koseri (strain ATCC BAA-895 / CDC 4225-83 / SGSC4696)).